Here is a 161-residue protein sequence, read N- to C-terminus: Nucleotide-binding protein Rfer_2692 (161 aa).

The protein belongs to the YajQ family.

Its function is as follows. Nucleotide-binding protein. This chain is Nucleotide-binding protein Rfer_2692, found in Albidiferax ferrireducens (strain ATCC BAA-621 / DSM 15236 / T118) (Rhodoferax ferrireducens).